We begin with the raw amino-acid sequence, 438 residues long: Probable glycine dehydrogenase (decarboxylating) subunit 1 (438 aa).

The protein belongs to the GcvP family. N-terminal subunit subfamily. As to quaternary structure, the glycine cleavage system is composed of four proteins: P, T, L and H. In this organism, the P 'protein' is a heterodimer of two subunits.

It carries out the reaction N(6)-[(R)-lipoyl]-L-lysyl-[glycine-cleavage complex H protein] + glycine + H(+) = N(6)-[(R)-S(8)-aminomethyldihydrolipoyl]-L-lysyl-[glycine-cleavage complex H protein] + CO2. In terms of biological role, the glycine cleavage system catalyzes the degradation of glycine. The P protein binds the alpha-amino group of glycine through its pyridoxal phosphate cofactor; CO(2) is released and the remaining methylamine moiety is then transferred to the lipoamide cofactor of the H protein. The protein is Probable glycine dehydrogenase (decarboxylating) subunit 1 of Syntrophomonas wolfei subsp. wolfei (strain DSM 2245B / Goettingen).